A 508-amino-acid chain; its full sequence is Kinesin light chain 3 (508 aa).

The tract at residues 1–20 (MSVQVAAPGSTGLGPERLNP) is disordered. The stretch at 88–150 (LLALSAHVSV…EEEKSHLQFL (63 aa)) forms a coiled coil. The disordered stretch occupies residues 154-197 (RQYDPPEESQRPESPPRRDSLASLFPSEEEEKKGPEAAGAAAAQ). Basic and acidic residues predominate over residues 161-173 (ESQRPESPPRRDS). A Phosphoserine modification is found at Ser173. TPR repeat units follow at residues 207–240 (LRTL…LERS), 249–282 (ATML…REQT), 291–324 (AATL…REKV), 333–366 (AKQL…YEAL), and 375–408 (AKTK…EALP). The interval 409–441 (APLGAPQGGTAGDTQQQVLRRSSSFSKLRESIR) is disordered. A compositionally biased stretch (polar residues) spans 420 to 434 (GDTQQQVLRRSSSFS). Ser467 bears the Phosphoserine mark. Positions 486-508 (LSTRHLSEAPRTLSISTQDLSPR) are disordered. Residues 498 to 508 (LSISTQDLSPR) are compositionally biased toward polar residues. Thr502 bears the Phosphothreonine mark. Position 506 is a phosphoserine (Ser506).

Belongs to the kinesin light chain family. As to quaternary structure, oligomer composed of two heavy chains and two light chains. Associates with microtubulin in an ATP-dependent manner. Interacts with KIF5C. Interacts with ODF1. Interacts with LRGUK. Interacts with VDAC2. Expressed in postmeiotic male germ cells (at protein level). Expressed in the testes (at protein level). Expressed in spleen, intestine, brain and ovary.

Its subcellular location is the cytoplasm. The protein localises to the cytoskeleton. It is found in the mitochondrion. Its function is as follows. Kinesin is a microtubule-associated force-producing protein that may play a role in organelle transport. Plays a role during spermiogenesis in the development of the sperm tail midpiece and in the normal function of spermatozoa. May play a role in the formation of the mitochondrial sheath formation in the developing spermatid midpiece. The chain is Kinesin light chain 3 (Klc3) from Mus musculus (Mouse).